The primary structure comprises 287 residues: Nucleotide-binding protein VIBHAR_03667 (287 aa).

Residue Gly-8–Ser-15 participates in ATP binding. Asp-56–Asn-59 contacts GTP.

This sequence belongs to the RapZ-like family.

In terms of biological role, displays ATPase and GTPase activities. The polypeptide is Nucleotide-binding protein VIBHAR_03667 (Vibrio campbellii (strain ATCC BAA-1116)).